The chain runs to 348 residues: tRNA N6-adenosine threonylcarbamoyltransferase (348 aa).

Residues His111 and His115 each coordinate Fe cation. Residues 134 to 138 (LVSGG), Asp167, Gly180, Asp184, and Asn279 contribute to the substrate site. Asp307 contributes to the Fe cation binding site.

Belongs to the KAE1 / TsaD family. Fe(2+) is required as a cofactor.

It is found in the cytoplasm. It catalyses the reaction L-threonylcarbamoyladenylate + adenosine(37) in tRNA = N(6)-L-threonylcarbamoyladenosine(37) in tRNA + AMP + H(+). Required for the formation of a threonylcarbamoyl group on adenosine at position 37 (t(6)A37) in tRNAs that read codons beginning with adenine. Is involved in the transfer of the threonylcarbamoyl moiety of threonylcarbamoyl-AMP (TC-AMP) to the N6 group of A37, together with TsaE and TsaB. TsaD likely plays a direct catalytic role in this reaction. This Synechocystis sp. (strain ATCC 27184 / PCC 6803 / Kazusa) protein is tRNA N6-adenosine threonylcarbamoyltransferase.